A 66-amino-acid chain; its full sequence is Large ribosomal subunit protein bL35 (66 aa).

2 stretches are compositionally biased toward basic residues: residues 1 to 16 and 23 to 45; these read MPKF…RFKR and KRSH…RQLR. Positions 1–66 are disordered; the sequence is MPKFKTHRAS…RIRQMLSGLK (66 aa).

It belongs to the bacterial ribosomal protein bL35 family.

This chain is Large ribosomal subunit protein bL35, found in Latilactobacillus sakei subsp. sakei (strain 23K) (Lactobacillus sakei subsp. sakei).